Here is a 274-residue protein sequence, read N- to C-terminus: Formamidopyrimidine-DNA glycosylase (274 aa).

P2 functions as the Schiff-base intermediate with DNA in the catalytic mechanism. Catalysis depends on E3, which acts as the Proton donor. K58 (proton donor; for beta-elimination activity) is an active-site residue. H91 and R110 together coordinate DNA. The segment at 238–272 (QVYDKTGQECVRCGTIIEKIQLGGRGTHFCPNCQR) adopts an FPG-type zinc-finger fold. R262 (proton donor; for delta-elimination activity) is an active-site residue.

Belongs to the FPG family. Monomer. Zn(2+) serves as cofactor.

It carries out the reaction Hydrolysis of DNA containing ring-opened 7-methylguanine residues, releasing 2,6-diamino-4-hydroxy-5-(N-methyl)formamidopyrimidine.. The catalysed reaction is 2'-deoxyribonucleotide-(2'-deoxyribose 5'-phosphate)-2'-deoxyribonucleotide-DNA = a 3'-end 2'-deoxyribonucleotide-(2,3-dehydro-2,3-deoxyribose 5'-phosphate)-DNA + a 5'-end 5'-phospho-2'-deoxyribonucleoside-DNA + H(+). In terms of biological role, involved in base excision repair of DNA damaged by oxidation or by mutagenic agents. Acts as a DNA glycosylase that recognizes and removes damaged bases. Has a preference for oxidized purines, such as 7,8-dihydro-8-oxoguanine (8-oxoG). Has AP (apurinic/apyrimidinic) lyase activity and introduces nicks in the DNA strand. Cleaves the DNA backbone by beta-delta elimination to generate a single-strand break at the site of the removed base with both 3'- and 5'-phosphates. In Streptococcus pneumoniae (strain ATCC BAA-255 / R6), this protein is Formamidopyrimidine-DNA glycosylase.